A 242-amino-acid polypeptide reads, in one-letter code: Tyrosine recombinase XerD-like (242 aa).

Positions 1-71 (MKEAIDQFIQ…AVNQFLYFLY (71 aa)) constitute a Core-binding (CB) domain. In terms of domain architecture, Tyr recombinase spans 90-242 (ENSSQGSLLD…KSITTLEKYR (153 aa)). Residues Lys148 and Arg209 contribute to the active site. Tyr241 (O-(3'-phospho-DNA)-tyrosine intermediate) is an active-site residue.

It belongs to the 'phage' integrase family. XerD-like subfamily.

It localises to the cytoplasm. Putative tyrosine recombinase. Not involved in the cutting and rejoining of the recombining DNA molecules on dif(SL) site. In Streptococcus gordonii (strain Challis / ATCC 35105 / BCRC 15272 / CH1 / DL1 / V288), this protein is Tyrosine recombinase XerD-like.